Reading from the N-terminus, the 123-residue chain is Immunoglobulin lambda variable 9-49 (123 aa).

A signal peptide spans 1–19; that stretch reads MAWAPLLLTLLSLLTGSLS. The segment at 20–44 is framework-1; that stretch reads QPVLTQPPSASASLGASVTLTCTLS. The Ig-like domain maps to 21 to 123; it reads PVLTQPPSAS…ADHGSGSNFV (103 aa). The cysteines at positions 41 and 112 are disulfide-linked. Residues 45-51 form a complementarity-determining-1 region; the sequence is SGYSNYK. A framework-2 region spans residues 52–68; the sequence is VDWYQQRPGKGPRFVMR. A complementarity-determining-2 region spans residues 69–76; the sequence is VGTGGIVG. The framework-3 stretch occupies residues 77-112; the sequence is SKGDGIPDRFSVLGSGLNRYLTIKNIQEEDESDYHC. Y96 carries the post-translational modification Phosphotyrosine. The residue at position 98 (T98) is a Phosphothreonine. The interval 113-123 is complementarity-determining-3; sequence GADHGSGSNFV.

Immunoglobulins are composed of two identical heavy chains and two identical light chains; disulfide-linked.

It is found in the secreted. Its subcellular location is the cell membrane. In terms of biological role, v region of the variable domain of immunoglobulin light chains that participates in the antigen recognition. Immunoglobulins, also known as antibodies, are membrane-bound or secreted glycoproteins produced by B lymphocytes. In the recognition phase of humoral immunity, the membrane-bound immunoglobulins serve as receptors which, upon binding of a specific antigen, trigger the clonal expansion and differentiation of B lymphocytes into immunoglobulins-secreting plasma cells. Secreted immunoglobulins mediate the effector phase of humoral immunity, which results in the elimination of bound antigens. The antigen binding site is formed by the variable domain of one heavy chain, together with that of its associated light chain. Thus, each immunoglobulin has two antigen binding sites with remarkable affinity for a particular antigen. The variable domains are assembled by a process called V-(D)-J rearrangement and can then be subjected to somatic hypermutations which, after exposure to antigen and selection, allow affinity maturation for a particular antigen. This Homo sapiens (Human) protein is Immunoglobulin lambda variable 9-49.